The chain runs to 613 residues: Transcription factor Sp2 (613 aa).

The segment at 1–32 (MSDPQTSMAATAAVSPSDYLQPAASTTQDSQP) is disordered. The segment covering 23–32 (AASTTQDSQP) has biased composition (polar residues). S78 bears the Phosphoserine mark. Over residues 225-235 (TGAPTQLLTES) the composition is skewed to polar residues. A disordered region spans residues 225–258 (TGAPTQLLTESPPTPLSKTNKKARKKSLPASQPP). The short motif at 361 to 369 (GEVQTVLVQ) is the 9aaTAD; inactive element. The span at 372–389 (PPATAAATSNTTCSSPAS) shows a compositional bias: low complexity. Residues 372–404 (PPATAAATSNTTCSSPASRAPHLSGTSKKHSAA) are disordered. 3 consecutive C2H2-type zinc fingers follow at residues 525–549 (HVCH…VRLH), 555–579 (FVCN…ARTH), and 585–607 (FECA…YKTH).

Belongs to the Sp1 C2H2-type zinc-finger protein family.

The protein localises to the nucleus. In terms of biological role, binds to GC box promoters elements and selectively activates mRNA synthesis from genes that contain functional recognition sites. In Homo sapiens (Human), this protein is Transcription factor Sp2 (SP2).